Here is a 380-residue protein sequence, read N- to C-terminus: Cytochrome b (380 aa).

A run of 4 helical transmembrane segments spans residues 33 to 53 (FGSL…FLAM), 77 to 98 (WLIR…FIHV), 113 to 133 (WNIG…GYVL), and 178 to 198 (FFAF…VHLL). Residues His83 and His97 each coordinate heme b. The heme b site is built by His182 and His196. Position 201 (His201) interacts with a ubiquinone. The next 4 helical transmembrane spans lie at 226-246 (IKDI…VLFF), 288-308 (LGGV…PLLN), 320-340 (ITQT…WIGG), and 347-367 (FTTI…IFMP).

It belongs to the cytochrome b family. As to quaternary structure, the cytochrome bc1 complex contains 11 subunits: 3 respiratory subunits (MT-CYB, CYC1 and UQCRFS1), 2 core proteins (UQCRC1 and UQCRC2) and 6 low-molecular weight proteins (UQCRH/QCR6, UQCRB/QCR7, UQCRQ/QCR8, UQCR10/QCR9, UQCR11/QCR10 and a cleavage product of UQCRFS1). This cytochrome bc1 complex then forms a dimer. Heme b serves as cofactor.

It is found in the mitochondrion inner membrane. Functionally, component of the ubiquinol-cytochrome c reductase complex (complex III or cytochrome b-c1 complex) that is part of the mitochondrial respiratory chain. The b-c1 complex mediates electron transfer from ubiquinol to cytochrome c. Contributes to the generation of a proton gradient across the mitochondrial membrane that is then used for ATP synthesis. The chain is Cytochrome b (MT-CYB) from Microryzomys minutus (Forest small rice rat).